A 324-amino-acid chain; its full sequence is Glyoxylate/hydroxypyruvate reductase B (324 aa).

Residues R237 and E266 contribute to the active site. H285 serves as the catalytic Proton donor.

Belongs to the D-isomer specific 2-hydroxyacid dehydrogenase family. GhrB subfamily. Homodimer.

Its subcellular location is the cytoplasm. The enzyme catalyses glycolate + NADP(+) = glyoxylate + NADPH + H(+). It catalyses the reaction (R)-glycerate + NAD(+) = 3-hydroxypyruvate + NADH + H(+). It carries out the reaction (R)-glycerate + NADP(+) = 3-hydroxypyruvate + NADPH + H(+). Functionally, catalyzes the NADPH-dependent reduction of glyoxylate and hydroxypyruvate into glycolate and glycerate, respectively. The polypeptide is Glyoxylate/hydroxypyruvate reductase B (Salmonella schwarzengrund (strain CVM19633)).